Here is a 342-residue protein sequence, read N- to C-terminus: Cytosolic Fe-S cluster assembly factor NBP35 (342 aa).

[4Fe-4S] cluster is bound by residues Cys-33, Cys-47, Cys-50, and Cys-56. 86 to 93 serves as a coordination point for ATP; it reads GKGGVGKS. Cys-259 and Cys-262 together coordinate [4Fe-4S] cluster.

This sequence belongs to the Mrp/NBP35 ATP-binding proteins family. NUBP1/NBP35 subfamily. Heterotetramer of 2 NBP35 and 2 CFD1 chains. It depends on [4Fe-4S] cluster as a cofactor.

The protein resides in the cytoplasm. Functionally, component of the cytosolic iron-sulfur (Fe/S) protein assembly (CIA) machinery. Required for maturation of extramitochondrial Fe-S proteins. The NBP35-CFD1 heterotetramer forms a Fe-S scaffold complex, mediating the de novo assembly of an Fe-S cluster and its transfer to target apoproteins. The chain is Cytosolic Fe-S cluster assembly factor NBP35 from Gibberella zeae (strain ATCC MYA-4620 / CBS 123657 / FGSC 9075 / NRRL 31084 / PH-1) (Wheat head blight fungus).